We begin with the raw amino-acid sequence, 715 residues long: Phosphoribosylformylglycinamidine synthase subunit PurL (715 aa).

The active site involves H33. ATP is bound at residue Y36. E77 is a Mg(2+) binding site. Substrate-binding positions include 78 to 81 and R100; that span reads SHNH. Residue H79 is the Proton acceptor of the active site. D101 contacts Mg(2+). Q225 lines the substrate pocket. D253 contacts Mg(2+). Residue 297–299 coordinates substrate; the sequence is ESQ. 2 residues coordinate ATP: N476 and G513. N514 contacts Mg(2+). S516 is a binding site for substrate.

Belongs to the FGAMS family. Monomer. Part of the FGAM synthase complex composed of 1 PurL, 1 PurQ and 2 PurS subunits.

It localises to the cytoplasm. It carries out the reaction N(2)-formyl-N(1)-(5-phospho-beta-D-ribosyl)glycinamide + L-glutamine + ATP + H2O = 2-formamido-N(1)-(5-O-phospho-beta-D-ribosyl)acetamidine + L-glutamate + ADP + phosphate + H(+). Its pathway is purine metabolism; IMP biosynthesis via de novo pathway; 5-amino-1-(5-phospho-D-ribosyl)imidazole from N(2)-formyl-N(1)-(5-phospho-D-ribosyl)glycinamide: step 1/2. Its function is as follows. Part of the phosphoribosylformylglycinamidine synthase complex involved in the purines biosynthetic pathway. Catalyzes the ATP-dependent conversion of formylglycinamide ribonucleotide (FGAR) and glutamine to yield formylglycinamidine ribonucleotide (FGAM) and glutamate. The FGAM synthase complex is composed of three subunits. PurQ produces an ammonia molecule by converting glutamine to glutamate. PurL transfers the ammonia molecule to FGAR to form FGAM in an ATP-dependent manner. PurS interacts with PurQ and PurL and is thought to assist in the transfer of the ammonia molecule from PurQ to PurL. The sequence is that of Phosphoribosylformylglycinamidine synthase subunit PurL from Methanosarcina barkeri (strain Fusaro / DSM 804).